The sequence spans 341 residues: Ribosomal RNA small subunit methyltransferase H (341 aa).

S-adenosyl-L-methionine is bound by residues 47 to 49, Asp64, Phe91, Asp109, and Gln116; that span reads GGY.

It belongs to the methyltransferase superfamily. RsmH family.

It is found in the cytoplasm. It catalyses the reaction cytidine(1402) in 16S rRNA + S-adenosyl-L-methionine = N(4)-methylcytidine(1402) in 16S rRNA + S-adenosyl-L-homocysteine + H(+). Functionally, specifically methylates the N4 position of cytidine in position 1402 (C1402) of 16S rRNA. This is Ribosomal RNA small subunit methyltransferase H from Rhizobium rhizogenes (strain K84 / ATCC BAA-868) (Agrobacterium radiobacter).